Reading from the N-terminus, the 459-residue chain is uncharacterized protein (459 aa).

One can recognise a TRAM domain in the interval 9-67 (KLEVGQTFPVTIKRLGINGEGVGYFKRQVVFIPGALPGEEVVAETTKIQRGFAEAKVKK). Positions 80, 86, 89, and 168 each coordinate [4Fe-4S] cluster. The S-adenosyl-L-methionine site is built by glutamine 292, tyrosine 321, aspartate 342, and aspartate 390. The Nucleophile role is filled by cysteine 417.

The protein belongs to the class I-like SAM-binding methyltransferase superfamily. RNA M5U methyltransferase family.

This is an uncharacterized protein from Bacillus cereus (strain ATCC 10987 / NRS 248).